The primary structure comprises 254 residues: MNPIAFHVGNLAIRWYGVVISIGAALGLLLAMYNCKIREASYDEFINMFLIAFPSAIIGARLYYVIFEFEDYRDNLINIFNIRQGGLAIHGGIIFGVLAVYIYLKYRKESFFEYVDVAAPSIILGQAIGRWGNFFNSEAHGGPVTKEFISKFPQFIQNGMFIEGTYYHPTFLYESIWNFIVCIFLVYLLKKTKKKGIVFMAYIGLYSLGRFFIEGLRTDSLYLGSIRVAQLISVLGIILSIFFIYNIIKKEKRY.

The next 4 membrane-spanning stretches (helical) occupy residues 11-31, 49-69, 84-104, and 109-129; these read LAIR…LLLA, FLIA…IFEF, QGGL…YIYL, and ESFF…QAIG. R130 lines the a 1,2-diacyl-sn-glycero-3-phospho-(1'-sn-glycerol) pocket. The next 3 helical transmembrane spans lie at 169–189, 196–216, and 228–248; these read PTFL…VYLL, GIVF…IEGL, and VAQL…YNII.

Belongs to the Lgt family.

It localises to the cell membrane. The enzyme catalyses L-cysteinyl-[prolipoprotein] + a 1,2-diacyl-sn-glycero-3-phospho-(1'-sn-glycerol) = an S-1,2-diacyl-sn-glyceryl-L-cysteinyl-[prolipoprotein] + sn-glycerol 1-phosphate + H(+). Its pathway is protein modification; lipoprotein biosynthesis (diacylglyceryl transfer). Its function is as follows. Catalyzes the transfer of the diacylglyceryl group from phosphatidylglycerol to the sulfhydryl group of the N-terminal cysteine of a prolipoprotein, the first step in the formation of mature lipoproteins. In Clostridium botulinum (strain Langeland / NCTC 10281 / Type F), this protein is Phosphatidylglycerol--prolipoprotein diacylglyceryl transferase.